The following is a 409-amino-acid chain: Arginine deiminase (409 aa).

Cysteine 399 functions as the Amidino-cysteine intermediate in the catalytic mechanism.

Belongs to the arginine deiminase family.

The protein resides in the cytoplasm. It carries out the reaction L-arginine + H2O = L-citrulline + NH4(+). It functions in the pathway amino-acid degradation; L-arginine degradation via ADI pathway; carbamoyl phosphate from L-arginine: step 1/2. This Streptococcus pneumoniae (strain P1031) protein is Arginine deiminase.